The chain runs to 1003 residues: Alpha-1,4 glucan phosphorylase L isozyme, chloroplastic/amyloplastic (1003 aa).

Residues 1–64 constitute a chloroplast transit peptide; sequence MASMTMRFHP…RRRSAFSVKC (64 aa). 2 disordered regions span residues 71–91 and 526–593; these read KQKV…SSFA and SSEE…KKLP. The span at 537–553 shows a compositional bias: acidic residues; sequence GEEEETSKEGGEEEEEK. Residues 569–580 are compositionally biased toward basic and acidic residues; the sequence is EVEKAIAEKDGT. An N6-(pyridoxal phosphate)lysine modification is found at K849.

This sequence belongs to the glycogen phosphorylase family. It depends on pyridoxal 5'-phosphate as a cofactor. As to expression, found predominantly in cotyledons and early seed coat.

The protein localises to the plastid. The protein resides in the chloroplast. Its subcellular location is the amyloplast. The catalysed reaction is [(1-&gt;4)-alpha-D-glucosyl](n) + phosphate = [(1-&gt;4)-alpha-D-glucosyl](n-1) + alpha-D-glucose 1-phosphate. Functionally, phosphorylase is an important allosteric enzyme in carbohydrate metabolism. Enzymes from different sources differ in their regulatory mechanisms and in their natural substrates. However, all known phosphorylases share catalytic and structural properties. The L isoform exhibits higher affinity for unbranched substrates such as glucan-like amylose and maltodextrin. In Vicia faba (Broad bean), this protein is Alpha-1,4 glucan phosphorylase L isozyme, chloroplastic/amyloplastic (PHO1).